Reading from the N-terminus, the 963-residue chain is Spliceosome associated factor 3, U4/U6 recycling protein (963 aa).

Residues 1–11 show a composition bias toward low complexity; that stretch reads MATAAATSASE. Disordered regions lie at residues 1–36 and 49–86; these read MATA…RTRR and KTMG…YEWE. Alanine 2 bears the N-acetylalanine mark. The mediates interaction with PRPF3 stretch occupies residues 2 to 351; that stretch reads ATAAATSASE…LVPDLWIRYS (350 aa). Serine 10 and serine 16 each carry phosphoserine. Over residues 14 to 23 the composition is skewed to basic and acidic residues; that stretch reads AESKAGPKAD. Positions 21 to 46 form a coiled coil; the sequence is KADGEEDEVKAARTRRKVLSRAVAAA. The span at 57-69 shows a compositional bias: acidic residues; it reads QQEEGVSESDGDE. Residues 82–110 are a coiled coil; that stretch reads EYEWEYDEEEEKNQLEIERLEEQLSINVY. HAT repeat units follow at residues 126–158, 164–195, 201–237, 242–275, 324–356, 359–391, 394–430, and 487–520; these read GELT…DEIS, LDRE…YSVG, GGLE…FESA, ARLE…WSED, GDPA…YLDR, KVKD…AMER, VDHQ…YLRR, and NNMQ…LERA. The residue at position 215 (serine 215) is a Phosphoserine. The tract at residues 487–520 is required for interaction with USP4; the sequence is NNMQKARELWDSIMTRGNAKYANMWLEYYNLERA. A necessary and sufficient for U6 snRNA binding region spans residues 537-953; the sequence is CTSDYPEHVC…AATEAPKMSN (417 aa). Residues 559-619 adopt a coiled-coil conformation; that stretch reads LEDWDIAVQK…ALKKKKKIRG (61 aa). Residues 600 to 670 form a required for nuclear localization region; it reads QRKRARAEKK…EVAPGPAGKC (71 aa). The Nuclear localization signal motif lies at 601 to 608; the sequence is RKRARAEK. The span at 608-619 shows a compositional bias: basic and acidic residues; the sequence is KKALKKKKKIRG. The interval 608 to 712 is disordered; sequence KKALKKKKKI…SITVFVSNLP (105 aa). Residues 620–635 are compositionally biased toward basic residues; sequence PEKRGADEDDEKEWGD. The segment covering 644 to 657 has biased composition (acidic residues); that stretch reads RRRVENSIPAAGET. The residue at position 650 (serine 650) is a Phosphoserine. Residue threonine 657 is modified to Phosphothreonine. Residues 695–712 show a composition bias toward basic and acidic residues; sequence VLHDSSKDSITVFVSNLP. The RRM 1 domain occupies 704–782; that stretch reads ITVFVSNLPY…RPMFVSPCVD (79 aa). Serine 769, serine 795, and serine 852 each carry phosphoserine. The RRM 2 domain maps to 801 to 878; that stretch reads HKLFISGLPF…NVIKVAISNP (78 aa). A compositionally biased stretch (basic and acidic residues) spans 900 to 909; the sequence is PQTYGARGKG. An Omega-N-methylarginine modification is found at arginine 906.

As to quaternary structure, component of the 7SK snRNP complex at least composed of P-TEFb (composed of CDK9 and CCNT1/cyclin-T1), HEXIM1, HEXIM2, BCDIN3, SART3 proteins and 7SK and U6 snRNAs. Interacts with AGO1 and AGO2. Interacts with PRPF3 and USP4; the interaction with PRPF3 is direct and recruits USP4 to its substrate PRPF3. Interacts with USP15; the interaction is direct.

It localises to the nucleus. Its subcellular location is the nucleoplasm. It is found in the cajal body. The protein resides in the nucleus speckle. The protein localises to the cytoplasm. In terms of biological role, U6 snRNP-binding protein that functions as a recycling factor of the splicing machinery. Promotes the initial reassembly of U4 and U6 snRNPs following their ejection from the spliceosome during its maturation. Also binds U6atac snRNPs and may function as a recycling factor for U4atac/U6atac spliceosomal snRNP, an initial step in the assembly of U12-type spliceosomal complex. The U12-type spliceosomal complex plays a role in the splicing of introns with non-canonical splice sites. May also function as a substrate-targeting factor for deubiquitinases like USP4 and USP15. Recruits USP4 to ubiquitinated PRPF3 within the U4/U5/U6 tri-snRNP complex, promoting PRPF3 deubiquitination and thereby regulating the spliceosome U4/U5/U6 tri-snRNP spliceosomal complex disassembly. May also recruit the deubiquitinase USP15 to histone H2B and mediate histone deubiquitination, thereby regulating gene expression and/or DNA repair. May play a role in hematopoiesis probably through transcription regulation of specific genes including MYC. The protein is Spliceosome associated factor 3, U4/U6 recycling protein of Pongo abelii (Sumatran orangutan).